Consider the following 200-residue polypeptide: Formate dehydrogenase iron-sulfur subunit (200 aa).

4Fe-4S ferredoxin-type domains follow at residues 7-37 (VKFYCDEARCIDCHGCDVACKEAHHLPVGVN), 50-81 (GKEKSLSIACMHCSDAPCAQVCPVDCFYVRAD), and 82-111 (GIVLHDKEKCIGCGYCLYACPFGAPQFPKS). [4Fe-4S] cluster contacts are provided by Cys16, Cys19, Cys22, Cys26, Cys59, Cys62, Cys67, Cys71, Cys91, Cys94, Cys97, Cys101, Cys123, Cys126, Cys155, and Cys159.

As to quaternary structure, formate dehydrogenase is a membrane-bound complex, formed of at least three different subunits. [4Fe-4S] cluster is required as a cofactor.

Its function is as follows. This chain is an electron transfer unit containing 18 cysteine residues, 16 of which occur in four clusters. This chain is Formate dehydrogenase iron-sulfur subunit (fdhB1), found in Wolinella succinogenes (strain ATCC 29543 / DSM 1740 / CCUG 13145 / JCM 31913 / LMG 7466 / NCTC 11488 / FDC 602W) (Vibrio succinogenes).